A 526-amino-acid polypeptide reads, in one-letter code: Dolichyl pyrophosphate Glc1Man9GlcNAc2 alpha-1,3-glucosyltransferase (526 aa).

The next 11 helical transmembrane spans lie at 9–29 (AGGHWFSALALGVTLLKCLLI), 108–128 (FSVILTDALFVYAVHECCKCI), 143–163 (FILSVLLLWNFGLLIVDHIHF), 188–208 (GALLFAVLLHLKHIYLYVAPA), 238–258 (VTSLGLIVFLVSALSLGPFLA), 334–354 (PLATLICTLIAILPSVFCLWF), 361–380 (GFLRCLVLCALSSFMFGWHV), 400–422 (AGDATVFLILATTGHYSLFPLLF), 427–449 (LPIKILLMLLFTVYSISSLKTLF), 461–481 (TVYLLGLGPLEVCCEFLLPFT), and 487–507 (YPFIPLLLTSVYCAVGITYAW).

The protein belongs to the ALG6/ALG8 glucosyltransferase family.

It localises to the endoplasmic reticulum membrane. It catalyses the reaction an alpha-D-Glc-(1-&gt;3)-alpha-D-Man-(1-&gt;2)-alpha-D-Man-(1-&gt;2)-alpha-D-Man-(1-&gt;3)-[alpha-D-Man-(1-&gt;2)-alpha-D-Man-(1-&gt;3)-[alpha-D-Man-(1-&gt;2)-alpha-D-Man-(1-&gt;6)]-alpha-D-Man-(1-&gt;6)]-beta-D-Man-(1-&gt;4)-beta-D-GlcNAc-(1-&gt;4)-alpha-D-GlcNAc-diphospho-di-trans,poly-cis-dolichol + a di-trans,poly-cis-dolichyl beta-D-glucosyl phosphate = an alpha-D-Glc-(1-&gt;3)-alpha-D-Glc-(1-&gt;3)-alpha-D-Man-(1-&gt;2)-alpha-D-Man-(1-&gt;2)-alpha-D-Man-(1-&gt;3)-[alpha-D-Man-(1-&gt;2)-alpha-D-Man-(1-&gt;3)-[alpha-D-Man-(1-&gt;2)-alpha-D-Man-(1-&gt;6)]-alpha-D-Man-(1-&gt;6)]-beta-D-Man-(1-&gt;4)-beta-D-GlcNAc-(1-&gt;4)-alpha-D-GlcNAc-diphospho-di-trans,poly-cis-dolichol + a di-trans,poly-cis-dolichyl phosphate + H(+). Its pathway is protein modification; protein glycosylation. Its function is as follows. Dolichyl pyrophosphate Glc1Man9GlcNAc2 alpha-1,3-glucosyltransferase that operates in the biosynthetic pathway of dolichol-linked oligosaccharides, the glycan precursors employed in protein asparagine (N)-glycosylation. The assembly of dolichol-linked oligosaccharides begins on the cytosolic side of the endoplasmic reticulum membrane and finishes in its lumen. The sequential addition of sugars to dolichol pyrophosphate produces dolichol-linked oligosaccharides containing fourteen sugars, including two GlcNAcs, nine mannoses and three glucoses. Once assembled, the oligosaccharide is transferred from the lipid to nascent proteins by oligosaccharyltransferases. In the lumen of the endoplasmic reticulum, adds the second glucose residue from dolichyl phosphate glucose (Dol-P-Glc) onto the lipid-linked oligosaccharide intermediate Glc(1)Man(9)GlcNAc(2)-PP-Dol to produce Glc(2)Man(9)GlcNAc(2)-PP-Dol. Glc(2)Man(9)GlcNAc(2)-PP-Dol is a substrate for ALG10, the following enzyme in the biosynthetic pathway. Required for PKD1/Polycystin-1 maturation and localization to the plasma membrane of the primary cilia. The protein is Dolichyl pyrophosphate Glc1Man9GlcNAc2 alpha-1,3-glucosyltransferase of Mus musculus (Mouse).